Consider the following 678-residue polypeptide: Glycine--tRNA ligase beta subunit (678 aa).

Belongs to the class-II aminoacyl-tRNA synthetase family. In terms of assembly, tetramer of two alpha and two beta subunits.

The protein resides in the cytoplasm. It catalyses the reaction tRNA(Gly) + glycine + ATP = glycyl-tRNA(Gly) + AMP + diphosphate. The polypeptide is Glycine--tRNA ligase beta subunit (Streptococcus suis (strain 98HAH33)).